We begin with the raw amino-acid sequence, 110 residues long: Parvalbumin alpha (110 aa).

Residue S2 is modified to N-acetylserine. S2, S8, and S24 each carry phosphoserine. EF-hand domains follow at residues 39–74 and 78–110; these read KSADDVKKVFHILDKDKSGFIEEDELGSILKGFSSD and LSAKETKTLMAAGDKDGDGKIGVEEFSTLVAES. Positions 52, 54, 56, 58, 60, and 63 each coordinate Ca(2+). S66 carries the phosphoserine modification. 5 residues coordinate Ca(2+): D91, D93, D95, K97, and E102.

Functionally, in muscle, parvalbumin is thought to be involved in relaxation after contraction. It binds two calcium ions. The sequence is that of Parvalbumin alpha (Pvalb) from Rattus norvegicus (Rat).